A 217-amino-acid polypeptide reads, in one-letter code: 3,4-dihydroxy-2-butanone 4-phosphate synthase (217 aa).

Residues 37-38 (RE), Asp-42, 150-154 (RGGHT), and Glu-174 each bind D-ribulose 5-phosphate. Mg(2+) is bound at residue Glu-38. His-153 lines the Mg(2+) pocket.

Belongs to the DHBP synthase family. Homodimer. The cofactor is Mg(2+). It depends on Mn(2+) as a cofactor.

It catalyses the reaction D-ribulose 5-phosphate = (2S)-2-hydroxy-3-oxobutyl phosphate + formate + H(+). The protein operates within cofactor biosynthesis; riboflavin biosynthesis; 2-hydroxy-3-oxobutyl phosphate from D-ribulose 5-phosphate: step 1/1. Its function is as follows. Catalyzes the conversion of D-ribulose 5-phosphate to formate and 3,4-dihydroxy-2-butanone 4-phosphate. The chain is 3,4-dihydroxy-2-butanone 4-phosphate synthase from Escherichia coli O17:K52:H18 (strain UMN026 / ExPEC).